The sequence spans 322 residues: Cytochrome c biogenesis protein CcsA (322 aa).

The next 8 helical transmembrane spans lie at 9 to 29, 44 to 64, 71 to 91, 98 to 118, 143 to 163, 226 to 246, 253 to 273, and 287 to 307; these read ILTH…LITL, GMIA…IYSG, LYES…VPYF, LTTI…SGLL, MILS…LLVI, VISL…VWAN, WSWD…AIYL, and AIVA…VNLL.

This sequence belongs to the CcmF/CycK/Ccl1/NrfE/CcsA family. As to quaternary structure, may interact with Ccs1.

The protein localises to the plastid. The protein resides in the chloroplast thylakoid membrane. In terms of biological role, required during biogenesis of c-type cytochromes (cytochrome c6 and cytochrome f) at the step of heme attachment. The polypeptide is Cytochrome c biogenesis protein CcsA (Helianthus annuus (Common sunflower)).